Reading from the N-terminus, the 134-residue chain is Protein LctB (134 aa).

The polypeptide is Protein LctB (lctB) (Geobacillus stearothermophilus (Bacillus stearothermophilus)).